The following is a 270-amino-acid chain: Phosphoserine phosphatase (270 aa).

D67 serves as the catalytic Nucleophile. 2 residues coordinate Mg(2+): D67 and D69. D69 acts as the Proton donor in catalysis. Residues E76, R112, S156–G157, and K205 each bind substrate. D227 lines the Mg(2+) pocket.

This sequence belongs to the HAD-like hydrolase superfamily. SerB family. Mg(2+) is required as a cofactor.

The enzyme catalyses O-phospho-L-serine + H2O = L-serine + phosphate. It carries out the reaction O-phospho-D-serine + H2O = D-serine + phosphate. It participates in amino-acid biosynthesis; L-serine biosynthesis; L-serine from 3-phospho-D-glycerate: step 3/3. Catalyzes the last step in the biosynthesis of serine from carbohydrates. The reaction mechanism proceeds via the formation of a phosphoryl-enzyme intermediates. This chain is Phosphoserine phosphatase (aay), found in Drosophila melanogaster (Fruit fly).